The following is a 3511-amino-acid chain: Unconventional myosin-XV (3511 aa).

Disordered regions lie at residues 1–44, 574–690, 712–1030, and 1105–1135; these read MADE…TPKI, KKPI…SLRQ, FAEP…PNKN, and VSSF…PQAC. Over residues 622–634 the composition is skewed to polar residues; that stretch reads SQPQARNNNNSHG. Over residues 654–672 the composition is skewed to pro residues; the sequence is PPMPAPSPSPASPLTPPFS. The segment covering 769–792 has biased composition (low complexity); it reads PSLRSLPGQGYHSPLGPLSPQLSL. Positions 797 to 807 are enriched in pro residues; the sequence is FQPPFPPPPRR. The Myosin motor domain maps to 1206–1883; that stretch reads DGVEDMTQLE…LHQLLESMRE (678 aa). Residue 1299 to 1306 participates in ATP binding; it reads GESGSGKT. Positions 1307 to 1334 form a coiled coil; that stretch reads EATKLILRCLAAMNQRRDVMQQIKILEA. Residues 1776–1783 are actin-binding; sequence FVRCLKPN. The interval 1872–2013 is neck or regulatory domain; the sequence is EHLHQLLESM…SSGPRVAVVR (142 aa). 2 consecutive IQ domains span residues 1886–1908 and 1909–1938; these read QNRA…HFRS and LRRK…SLLK. Residues 2014-3511 form a tail region; it reads APRLQAEPCV…TLPPSEITLL (1498 aa). One can recognise a MyTH4 1 domain in the interval 2049–2195; it reads MLTVPLKMPL…PTQLEWTAIQ (147 aa). Disordered stretches follow at residues 2330-2359, 2392-2425, 2460-2509, 2565-2584, and 2629-2648; these read SHKE…GEST, YRMK…PIPG, PLSA…SVAK, KQPP…GKVF, and RPCM…PPED. Positions 2337 to 2351 are enriched in polar residues; it reads NGETEAQRWTSNRQA. A compositionally biased stretch (gly residues) spans 2395–2406; sequence KGGGQPGGGGGS. A compositionally biased stretch (basic and acidic residues) spans 2410–2420; the sequence is DTSRRPPEPKL. Basic and acidic residues predominate over residues 2573–2584; that stretch reads PEARRTDGGKVF. The 87-residue stretch at 2848-2934 folds into the SH3 domain; the sequence is KDSDYVVAVR…PSELVQPAAA (87 aa). A disordered region spans residues 2964-2984; the sequence is EVGRRREGPPVRARSADSGED. Over residues 2965–2980 the composition is skewed to basic and acidic residues; sequence VGRRREGPPVRARSAD. A MyTH4 2 domain is found at 3031 to 3185; it reads FTKVPIQESL…PSNMELRAML (155 aa). One can recognise an FERM domain in the interval 3190-3511; the sequence is SKRQLFLLPG…TLPPSEITLL (322 aa).

Belongs to the TRAFAC class myosin-kinesin ATPase superfamily. Myosin family. As to quaternary structure, interacts with the third PDZ domain of WHRN which is necessary for localization of WHRN to stereocilium tips. Interacts with FASLG. Interacts with EPS8. In terms of tissue distribution, in the developing inner ear, expressed in cochlea and vestibular apparatus. Expression appears to be restricted to cochlear neurosensory cells and upper epithelial layer of macula saccula. Also expressed in macula utriculi and cristae ampullaris of the semicircular canals. In adult cochlear hair cells, highest expression in stereocilia and apical body.

It is found in the cell projection. It localises to the stereocilium. The protein localises to the cytoplasm. Its subcellular location is the cytoskeleton. Myosins are actin-based motor molecules with ATPase activity. Unconventional myosins serve in intracellular movements. Their highly divergent tails are presumed to bind to membranous compartments, which would be moved relative to actin filaments. Required for the arrangement of stereocilia in mature hair bundles. The chain is Unconventional myosin-XV (Myo15a) from Mus musculus (Mouse).